A 186-amino-acid polypeptide reads, in one-letter code: Peptidyl-tRNA hydrolase (186 aa).

Residue tyrosine 17 participates in tRNA binding. Histidine 22 serves as the catalytic Proton acceptor. Tyrosine 64 and asparagine 66 together coordinate tRNA.

The protein belongs to the PTH family. Monomer.

It is found in the cytoplasm. It catalyses the reaction an N-acyl-L-alpha-aminoacyl-tRNA + H2O = an N-acyl-L-amino acid + a tRNA + H(+). Functionally, hydrolyzes ribosome-free peptidyl-tRNAs (with 1 or more amino acids incorporated), which drop off the ribosome during protein synthesis, or as a result of ribosome stalling. In terms of biological role, catalyzes the release of premature peptidyl moieties from peptidyl-tRNA molecules trapped in stalled 50S ribosomal subunits, and thus maintains levels of free tRNAs and 50S ribosomes. The polypeptide is Peptidyl-tRNA hydrolase (Methylacidiphilum infernorum (isolate V4) (Methylokorus infernorum (strain V4))).